The following is a 270-amino-acid chain: MKKITIYDLAELSGVSASAVSAILNGNWKKRRISAKLAEKVTRIAEEQGYAINRQASMLRSKKSHVIGMIIPKYDNRYFGSIAERFEEMARERGLLPIITCTRRRPELEIEAVKAMLSWQVDWVVATGATNPDKISALCQQAGVPTVNLDLPGSLSPSVISDNYGGAKALTHKILANSARRRGELAPLTFIGGRRATITPASVYAASTMRIASWGLACRRRIFWLPAIRKATLRTACRSGLAARRRCCRGYLLTRRYPWKGLCAGCRRWV.

Residues 1–61 (MKKITIYDLA…INRQASMLRS (61 aa)) enclose the HTH lacI-type domain. Positions 6-25 (IYDLAELSGVSASAVSAILN) form a DNA-binding region, H-T-H motif.

Its function is as follows. Repressor for the genes of the ribitol operon. Binds D-ribulose as an inducer. This chain is Ribitol operon repressor (rbtR), found in Klebsiella aerogenes (Enterobacter aerogenes).